We begin with the raw amino-acid sequence, 187 residues long: Superoxide dismutase [Cu-Zn] (187 aa).

Residues 1–23 (MMKMKTLLALAISGICAAGVANA) form the signal peptide. Cu cation-binding residues include histidine 80, histidine 82, and histidine 105. An intrachain disulfide couples cysteine 87 to cysteine 183. Zn(2+)-binding residues include histidine 105, histidine 114, histidine 123, and aspartate 126. Histidine 161 is a binding site for Cu cation.

This sequence belongs to the Cu-Zn superoxide dismutase family. As to quaternary structure, homodimer. It depends on Cu cation as a cofactor. The cofactor is Zn(2+).

The protein resides in the periplasm. The catalysed reaction is 2 superoxide + 2 H(+) = H2O2 + O2. Its function is as follows. Destroys radicals which are normally produced within the cells and which are toxic to biological systems. In terms of biological role, may confer survival advantage by accelerating dismutation of superoxide of environmental origin to hydrogen peroxide, disruptive to the normal mucociliary clearance process in the host. This is Superoxide dismutase [Cu-Zn] (sodC) from Haemophilus parainfluenzae.